An 83-amino-acid chain; its full sequence is NAD(P)H-quinone oxidoreductase subunit L, organellar chromatophore (83 aa).

2 consecutive transmembrane segments (helical) span residues L17–Y37 and L53–L73.

The protein belongs to the complex I NdhL subunit family. In terms of assembly, NDH-1 can be composed of about 15 different subunits; different subcomplexes with different compositions have been identified which probably have different functions.

It localises to the plastid. Its subcellular location is the organellar chromatophore thylakoid membrane. It carries out the reaction a plastoquinone + NADH + (n+1) H(+)(in) = a plastoquinol + NAD(+) + n H(+)(out). It catalyses the reaction a plastoquinone + NADPH + (n+1) H(+)(in) = a plastoquinol + NADP(+) + n H(+)(out). Its function is as follows. NDH-1 shuttles electrons from an unknown electron donor, via FMN and iron-sulfur (Fe-S) centers, to quinones in the respiratory and/or the photosynthetic chain. The immediate electron acceptor for the enzyme in this species is believed to be plastoquinone. Couples the redox reaction to proton translocation, and thus conserves the redox energy in a proton gradient. The chain is NAD(P)H-quinone oxidoreductase subunit L, organellar chromatophore from Paulinella chromatophora.